A 347-amino-acid chain; its full sequence is Probable dual-specificity RNA methyltransferase RlmN (347 aa).

The active-site Proton acceptor is glutamate 91. A Radical SAM core domain is found at 97-327 (YKYGNSICVS…ATVRREMGSD (231 aa)). Cysteine 104 and cysteine 332 are disulfide-bonded. [4Fe-4S] cluster is bound by residues cysteine 111, cysteine 115, and cysteine 118. S-adenosyl-L-methionine contacts are provided by residues 158–159 (GE), serine 190, 213–215 (SLH), and asparagine 289. The active-site S-methylcysteine intermediate is cysteine 332.

The protein belongs to the radical SAM superfamily. RlmN family. Requires [4Fe-4S] cluster as cofactor.

The protein resides in the cytoplasm. It carries out the reaction adenosine(2503) in 23S rRNA + 2 reduced [2Fe-2S]-[ferredoxin] + 2 S-adenosyl-L-methionine = 2-methyladenosine(2503) in 23S rRNA + 5'-deoxyadenosine + L-methionine + 2 oxidized [2Fe-2S]-[ferredoxin] + S-adenosyl-L-homocysteine. It catalyses the reaction adenosine(37) in tRNA + 2 reduced [2Fe-2S]-[ferredoxin] + 2 S-adenosyl-L-methionine = 2-methyladenosine(37) in tRNA + 5'-deoxyadenosine + L-methionine + 2 oxidized [2Fe-2S]-[ferredoxin] + S-adenosyl-L-homocysteine. In terms of biological role, specifically methylates position 2 of adenine 2503 in 23S rRNA and position 2 of adenine 37 in tRNAs. The protein is Probable dual-specificity RNA methyltransferase RlmN of Clostridium perfringens (strain 13 / Type A).